Reading from the N-terminus, the 666-residue chain is Peptidase S41 family protein phomP1 (666 aa).

Positions 1-27 are cleaved as a signal peptide; it reads MSSFLVQTAVVRLFLLGVVFWFPFALS. N-linked (GlcNAc...) asparagine glycosylation is found at N70, N214, and N234. The tract at residues 303 to 504 is peptidase S41 domain; it reads DVAVLQITSF…LLQAQGVRTV (202 aa). N-linked (GlcNAc...) asparagine glycosylation is found at N555 and N612.

It belongs to the peptidase S41A family.

The protein operates within mycotoxin biosynthesis. Functionally, peptidase S41 family protein; part of the gene cluster that mediates the biosynthesis of the phomopsins, a group of hexapeptide mycotoxins which infects lupins and causes lupinosis disease in livestock. Within the pathway, phomP1 and phomP1' are probably involved in the processing of the phomA and phomA' precursors. The pathway starts with the processing of the precursor phomA by several endopeptidases including kexin proteases as well as the cluster-specific S41 family peptidase phomP1 and the oligopeptidase phomG to produce 10 identical copies of the hexapeptide Tyr-Val-Ile-Pro-Ile-Asp. After being excised from the precursor peptide, the core peptides are cyclized and modified post-translationally by enzymes encoded within the gene cluster. The timing and order of proteolysis of the phomA precursor and PTMs are still unknown. Two tyrosinase-like enzymes, phomQ1 and phomQ2, catalyze the chlorination and hydroxylation of Tyr, respectively. PhomYb, is proposed to be involved in the construction of the macrocyclic structure. The other 4 ustYa family proteins may be involved in PTMs that generate the unique structure of phomopsin A. PhomYa is required for the hydroxylation of C-beta of Tyr. PhomYc, phomYd, and phomYe are responsible for the biosynthesis of 2,3-dehydroisoleucine (dIle), 2,3-dehydroaspartic acid (dAsp), and 3,4-dehydroproline (dPro), respectively. While dIle formation by phomYc is indispensable for the installation of dAsp by phomYd, the order of the other PTMs have not been elucidated yet. Most of the biosynthetic enzymes likely have broad substrate specificity, and thus, there might be a metabolic grid from a precursor to phomopsin A. The enzyme(s) responsible for the biosynthesis of 3,4-dehydrovaline (dVal) have also not been identified yet. Finally, phomM acts as an S-adenosylmethionine-dependent alpha-N-methyltransferase that catalyzes two successive N-methylation reactions, converting N-desmethyl-phomopsin A to phomopsin A and phomopsin A further to an N,N-dimethylated congener called phomopsin E. The chain is Peptidase S41 family protein phomP1 from Diaporthe leptostromiformis (Lupinosis disease fungus).